A 317-amino-acid chain; its full sequence is 4-hydroxy-3-methylbut-2-enyl diphosphate reductase (317 aa).

Residue cysteine 12 participates in [4Fe-4S] cluster binding. Residues histidine 41 and histidine 74 each coordinate (2E)-4-hydroxy-3-methylbut-2-enyl diphosphate. Dimethylallyl diphosphate is bound by residues histidine 41 and histidine 74. The isopentenyl diphosphate site is built by histidine 41 and histidine 74. [4Fe-4S] cluster is bound at residue cysteine 96. Histidine 124 contributes to the (2E)-4-hydroxy-3-methylbut-2-enyl diphosphate binding site. Histidine 124 is a dimethylallyl diphosphate binding site. Residue histidine 124 coordinates isopentenyl diphosphate. Glutamate 126 functions as the Proton donor in the catalytic mechanism. Threonine 169 contributes to the (2E)-4-hydroxy-3-methylbut-2-enyl diphosphate binding site. A [4Fe-4S] cluster-binding site is contributed by cysteine 199. (2E)-4-hydroxy-3-methylbut-2-enyl diphosphate-binding residues include serine 227, serine 228, asparagine 229, and serine 271. Residues serine 227, serine 228, asparagine 229, and serine 271 each coordinate dimethylallyl diphosphate. Residues serine 227, serine 228, asparagine 229, and serine 271 each coordinate isopentenyl diphosphate.

It belongs to the IspH family. [4Fe-4S] cluster serves as cofactor.

The catalysed reaction is isopentenyl diphosphate + 2 oxidized [2Fe-2S]-[ferredoxin] + H2O = (2E)-4-hydroxy-3-methylbut-2-enyl diphosphate + 2 reduced [2Fe-2S]-[ferredoxin] + 2 H(+). The enzyme catalyses dimethylallyl diphosphate + 2 oxidized [2Fe-2S]-[ferredoxin] + H2O = (2E)-4-hydroxy-3-methylbut-2-enyl diphosphate + 2 reduced [2Fe-2S]-[ferredoxin] + 2 H(+). It participates in isoprenoid biosynthesis; dimethylallyl diphosphate biosynthesis; dimethylallyl diphosphate from (2E)-4-hydroxy-3-methylbutenyl diphosphate: step 1/1. Its pathway is isoprenoid biosynthesis; isopentenyl diphosphate biosynthesis via DXP pathway; isopentenyl diphosphate from 1-deoxy-D-xylulose 5-phosphate: step 6/6. Catalyzes the conversion of 1-hydroxy-2-methyl-2-(E)-butenyl 4-diphosphate (HMBPP) into a mixture of isopentenyl diphosphate (IPP) and dimethylallyl diphosphate (DMAPP). Acts in the terminal step of the DOXP/MEP pathway for isoprenoid precursor biosynthesis. This chain is 4-hydroxy-3-methylbut-2-enyl diphosphate reductase, found in Vibrio parahaemolyticus serotype O3:K6 (strain RIMD 2210633).